A 182-amino-acid polypeptide reads, in one-letter code: UPF0316 protein BCAH820_3389 (182 aa).

3 consecutive transmembrane segments (helical) span residues 6–26 (LIFVLQIIYVPILTIRTILLV), 32–52 (SAAAVGLLEGAIYIVSLGIVF), and 58–78 (WMNIVAYVIGFSAGLLLGGYI).

The protein belongs to the UPF0316 family.

It is found in the cell membrane. The chain is UPF0316 protein BCAH820_3389 from Bacillus cereus (strain AH820).